The following is a 203-amino-acid chain: N-(5'-phosphoribosyl)anthranilate isomerase (203 aa).

Belongs to the TrpF family.

It carries out the reaction N-(5-phospho-beta-D-ribosyl)anthranilate = 1-(2-carboxyphenylamino)-1-deoxy-D-ribulose 5-phosphate. Its pathway is amino-acid biosynthesis; L-tryptophan biosynthesis; L-tryptophan from chorismate: step 3/5. The polypeptide is N-(5'-phosphoribosyl)anthranilate isomerase (Sulfurihydrogenibium sp. (strain YO3AOP1)).